Here is a 475-residue protein sequence, read N- to C-terminus: BTB/POZ domain-containing protein 10 (475 aa).

The segment at Met1–Lys144 is disordered. The segment covering Leu22–Lys31 has biased composition (basic residues). Over residues Gly57–Glu80 the composition is skewed to basic and acidic residues. Residues Ser81–Thr94 show a composition bias toward polar residues. Basic and acidic residues predominate over residues His97 to Ser107. The span at Ser108 to Lys144 shows a compositional bias: low complexity. Residues Ser146–Leu475 form an interaction with AKT family members region. A BTB domain is found at Glu167–Asp241. Residues Glu451–Leu475 are disordered.

In terms of assembly, interacts (via C-terminal 330-amino-acid region) with AKT1; AKT2 and AKT3. Interacts with PPP2CA and PPP1CA. As to expression, ubiquitously expressed (at protein level).

It localises to the nucleus. It is found in the cytoplasm. Plays a major role as an activator of AKT family members by inhibiting PPP2CA-mediated dephosphorylation, thereby keeping AKTs activated. Plays a role in preventing motor neuronal death and in accelerating the growth of pancreatic beta cells. This is BTB/POZ domain-containing protein 10 (Btbd10) from Mus musculus (Mouse).